We begin with the raw amino-acid sequence, 635 residues long: Threonine--tRNA ligase (635 aa).

The TGS domain occupies 1–61 (MIKITLKDGK…HKDSSLEILT (61 aa)). Positions 242-532 (DHRKLGKELD…LIEQYAGAFP (291 aa)) are catalytic. 3 residues coordinate Zn(2+): C333, H384, and H509.

This sequence belongs to the class-II aminoacyl-tRNA synthetase family. Homodimer. It depends on Zn(2+) as a cofactor.

Its subcellular location is the cytoplasm. It carries out the reaction tRNA(Thr) + L-threonine + ATP = L-threonyl-tRNA(Thr) + AMP + diphosphate + H(+). Its function is as follows. Catalyzes the attachment of threonine to tRNA(Thr) in a two-step reaction: L-threonine is first activated by ATP to form Thr-AMP and then transferred to the acceptor end of tRNA(Thr). Also edits incorrectly charged L-seryl-tRNA(Thr). The polypeptide is Threonine--tRNA ligase (Clostridium botulinum (strain Langeland / NCTC 10281 / Type F)).